We begin with the raw amino-acid sequence, 680 residues long: NADPH--cytochrome P450 reductase (680 aa).

The Lumenal segment spans residues 1 to 5 (MALDK). A helical transmembrane segment spans residues 6-23 (LDLYVIIVLAVAVAAYFA). Residues 24–680 (KNQFLDQPQD…VQNRYQEDVW (657 aa)) are Cytoplasmic-facing. In terms of domain architecture, Flavodoxin-like spans 60 to 204 (TLLLFGSQTG…DFLTWKDNVF (145 aa)). Residues 66–71 (SQTGTA), 117–120 (ATYG), 152–161 (LGNSTYEFYN), and Asp187 contribute to the FMN site. The region spanning 264–509 (THPYLAKISK…SGPRNKFNKF (246 aa)) is the FAD-binding FR-type domain. An NADP(+)-binding site is contributed by Arg283. Residues 439 to 442 (RYYS), 457 to 459 (TAV), and 473 to 476 (GVVT) each bind FAD. NADP(+)-binding positions include Thr537, 599 to 600 (SR), 606 to 610 (KVYVQ), and Asp642. Position 680 (Trp680) interacts with FAD.

Belongs to the NADPH--cytochrome P450 reductase family. This sequence in the N-terminal section; belongs to the flavodoxin family. The protein in the C-terminal section; belongs to the flavoprotein pyridine nucleotide cytochrome reductase family. FAD is required as a cofactor. Requires FMN as cofactor.

It is found in the endoplasmic reticulum membrane. It localises to the mitochondrion outer membrane. The protein resides in the cell membrane. It carries out the reaction 2 oxidized [cytochrome P450] + NADPH = 2 reduced [cytochrome P450] + NADP(+) + H(+). This enzyme is required for electron transfer from NADP to cytochrome P450 in microsomes. It can also provide electron transfer to heme oxygenase and cytochrome B5. Involved in ergosterol biosynthesis. This chain is NADPH--cytochrome P450 reductase, found in Candida maltosa (Yeast).